Consider the following 60-residue polypeptide: UPF0434 protein NMC0623 (60 aa).

It belongs to the UPF0434 family.

This is UPF0434 protein NMC0623 from Neisseria meningitidis serogroup C / serotype 2a (strain ATCC 700532 / DSM 15464 / FAM18).